The following is a 188-amino-acid chain: Accessory gene regulator protein B (188 aa).

4 helical membrane passes run 49–69 (LALL…FLTL), 104–126 (ISFQ…YAPA), 143–163 (IKSI…PPPY), and 166–186 (FVVY…SIKE).

It belongs to the AgrB family.

The protein localises to the cell membrane. Its function is as follows. Essential for the production of a quorum sensing system signal molecule, the autoinducing peptide (AIP). This quorum sensing system is responsible for the regulation of the expression of virulence factor genes. Involved in the proteolytic processing of AgrD, the precursor of AIP. The polypeptide is Accessory gene regulator protein B (Staphylococcus intermedius).